We begin with the raw amino-acid sequence, 385 residues long: MAWSGGKDIVDQIFDAGYWLVSKSAVLSDEIKNHVEKSIESISGKISNKETPRLQENDSNRSKVYKTLRIGLQDHWKLGLGISATSLCLYLGYRTFFKLPPNLPEAESQVVLILGDMNDPIIRNQVMDLYRRRFTVYICTENADVYKKHEEDQDFIYYIDPTCEKDFEGFFVDVPRLASILFMPRLSYHPSGVISCDSLESEIHSSIFVYYQALLSIIPHLKRKTQLIMFNPSLTADLNLVHHSTEIITSGIIDSLFKIFKEYQRLNVSTIKLGILQIGSQPSNYKFLRMAGSDIHEALHYPVYKMIMSANGYKLRQLLSWLTTLGGYNSVYYCGRFSYLVSWPFASLIFNHHTRLSLKRLRGRLAKVYSSIISFFCRSSSKSSK.

Belongs to the UPF0744 family.

Its subcellular location is the mitochondrion outer membrane. This chain is UPF0744 protein YSC83 (YSC83), found in Saccharomyces cerevisiae (strain ATCC 204508 / S288c) (Baker's yeast).